Reading from the N-terminus, the 172-residue chain is Large ribosomal subunit protein uL10 (172 aa).

Belongs to the universal ribosomal protein uL10 family. In terms of assembly, part of the ribosomal stalk of the 50S ribosomal subunit. The N-terminus interacts with L11 and the large rRNA to form the base of the stalk. The C-terminus forms an elongated spine to which L12 dimers bind in a sequential fashion forming a multimeric L10(L12)X complex.

In terms of biological role, forms part of the ribosomal stalk, playing a central role in the interaction of the ribosome with GTP-bound translation factors. The chain is Large ribosomal subunit protein uL10 from Macrococcus caseolyticus (strain JCSC5402) (Macrococcoides caseolyticum).